Consider the following 256-residue polypeptide: MGRGRVQLKRIENKINRQVTFSKRRAGLLKKAHEISVLCDAEVALVVFSHKGKLFEYSTDSCMEKILERYERYSYAERQLIAPESDVNTNWSMEYNRLKAKIELLERNQRHYLGEDLQAMSPKELQNLEQQLDTALKHIRTRKNQLMYESINELQKKEKAIQEQNSMLSKQIKEREKILRAQQEQWDQQNQGHNMPPPLPPQQHQIQHPYMLSHQPSPFLNMGGLYQEDDPMAMRRNDLELTLEPVYNCNLGCFAA.

The 61-residue stretch at 1–61 folds into the MADS-box domain; that stretch reads MGRGRVQLKR…GKLFEYSTDS (61 aa). The K-box domain maps to 88 to 178; that stretch reads NTNWSMEYNR…SKQIKEREKI (91 aa). Residues 88–185 adopt a coiled-coil conformation; the sequence is NTNWSMEYNR…EKILRAQQEQ (98 aa).

In terms of assembly, homodimer capable of binding to CArG-box sequences. Heterodimer with SEP3, AP1 and SVP. Binds AP3/PI to form a ternary complex. Interacts with the SEU-LUG corepressor complex when complexed to AGL24 or SVP. Interacts with AGL15 and AGL16. Interacts with TT16/AGL32. As to expression, expressed in young flower primordia, later becomes localized to sepals and petals.

Its subcellular location is the nucleus. Its function is as follows. Transcription factor that promotes early floral meristem identity in synergy with LEAFY. Is required subsequently for the transition of an inflorescence meristem into a floral meristem. Is indispensable for normal development of sepals and petals in flowers. Positively regulates the B class homeotic proteins APETALA3 and PISTILLATA with the cooperation of LEAFY and UFO. Interacts with SEPALLATA3 or AP3/PI heterodimer to form complexes that could be involved in genes regulation during floral meristem development. Positively regulates AGAMOUS in cooperation with LEAFY. Displays a redundant function with CAULIFLOWER in the up-regulation of LEAFY. Together with AGL24 and SVP, controls the identity of the floral meristem and regulates expression of class B, C and E genes. Represses flowering time genes AGL24, SVP and SOC1 in emerging floral meristems. The protein is Floral homeotic protein APETALA 1 (AP1) of Arabidopsis thaliana (Mouse-ear cress).